The following is a 483-amino-acid chain: Prenyltransferase vrtC (483 aa).

This sequence belongs to the tryptophan dimethylallyltransferase family.

Its pathway is secondary metabolite biosynthesis; terpenoid biosynthesis. In terms of biological role, prenyltransferase; part of the gene cluster that mediates the biosynthesis of viridicatumtoxin, a tetracycline-like fungal meroterpenoid with a unique, fused spirobicyclic ring system. The first step of the pathway is the production of the malonamoyl-CoA starter unit for the polyketide synthase vrtA. The aldolase vrtJ may be involved in the synthesis of the malonamate substrate for malonamoyl-CoA synthetase vrtB. The polyketide synthase vrtA then may utilize the malonamoyl-CoA starter unit, followed by sequential condensation of eight malonyl-CoA units to form the polyketide backbone. The cyclization of the last ring could be mediated by the lactamase-like protein vrtG. The proposed post-PKS tailoring steps are a hydroxylation at C5 catalyzed the cytochrome P450 monooxygenase vrtE, a hydroxylation at C12a catalyzed by VrtH and/or VrtI, and an O-methylation by the O-methyltransferase vrtF. VrtC is then proposed to catalyze the transfer of a geranyl group synthesized by vrtD to the aromatic C ring of the tetracyclic polyketide intermediate of viridicatumtoxin to yield previridicatumtoxin. Finally, the cytochrome P450 monooxygenase vrtK catalyzes the spirocyclization of the geranyl moiety of previridicatumtoxin to afford viridicatumtoxin. The sequence is that of Prenyltransferase vrtC from Penicillium aethiopicum.